The primary structure comprises 109 residues: Biphenyl dioxygenase system ferredoxin subunit (109 aa).

One can recognise a Rieske domain in the interval 4–100 (TRVCDRRDVP…IRIEDNDVLV (97 aa)). Residues Cys43, His45, Cys63, and His66 each contribute to the [2Fe-2S] cluster site.

This sequence belongs to the bacterial ring-hydroxylating dioxygenase ferredoxin component family. This dioxygenase system consists of four proteins: the two subunits of the hydroxylase component (BphA and BphE), a ferredoxin (BphF) and a ferredoxin reductase (BphG).

In terms of biological role, this protein seems to be a 2Fe-2S ferredoxin. This chain is Biphenyl dioxygenase system ferredoxin subunit (bphF), found in Paraburkholderia xenovorans (strain LB400).